A 249-amino-acid chain; its full sequence is Ubiquinone biosynthesis O-methyltransferase (249 aa).

Residues Arg-41, Gly-72, Asp-93, and Met-136 each coordinate S-adenosyl-L-methionine.

Belongs to the methyltransferase superfamily. UbiG/COQ3 family.

It catalyses the reaction a 3-demethylubiquinol + S-adenosyl-L-methionine = a ubiquinol + S-adenosyl-L-homocysteine + H(+). The enzyme catalyses a 3-(all-trans-polyprenyl)benzene-1,2-diol + S-adenosyl-L-methionine = a 2-methoxy-6-(all-trans-polyprenyl)phenol + S-adenosyl-L-homocysteine + H(+). It participates in cofactor biosynthesis; ubiquinone biosynthesis. In terms of biological role, O-methyltransferase that catalyzes the 2 O-methylation steps in the ubiquinone biosynthetic pathway. In Methylobacterium sp. (strain 4-46), this protein is Ubiquinone biosynthesis O-methyltransferase.